We begin with the raw amino-acid sequence, 29 residues long: Cytochrome b6-f complex subunit 8 (29 aa).

Residues 3 to 23 (IVGIAWAALMVVFTFSLSLVV) traverse the membrane as a helical segment.

This sequence belongs to the PetN family. As to quaternary structure, the 4 large subunits of the cytochrome b6-f complex are cytochrome b6, subunit IV (17 kDa polypeptide, PetD), cytochrome f and the Rieske protein, while the 4 small subunits are PetG, PetL, PetM and PetN. The complex functions as a dimer.

The protein resides in the plastid. The protein localises to the chloroplast thylakoid membrane. Its function is as follows. Component of the cytochrome b6-f complex, which mediates electron transfer between photosystem II (PSII) and photosystem I (PSI), cyclic electron flow around PSI, and state transitions. The protein is Cytochrome b6-f complex subunit 8 of Cryptomeria japonica (Japanese cedar).